The sequence spans 67 residues: Large ribosomal subunit protein bL35 (67 aa).

The interval 1–20 is disordered; it reads MPKLKTKSGAKKRFVPKKSG.

Belongs to the bacterial ribosomal protein bL35 family.

The polypeptide is Large ribosomal subunit protein bL35 (Anaeromyxobacter dehalogenans (strain 2CP-C)).